The chain runs to 344 residues: Phenylalanine--tRNA ligase alpha subunit (344 aa).

Glu-256 contributes to the Mg(2+) binding site.

The protein belongs to the class-II aminoacyl-tRNA synthetase family. Phe-tRNA synthetase alpha subunit type 1 subfamily. As to quaternary structure, tetramer of two alpha and two beta subunits. Requires Mg(2+) as cofactor.

The protein localises to the cytoplasm. The enzyme catalyses tRNA(Phe) + L-phenylalanine + ATP = L-phenylalanyl-tRNA(Phe) + AMP + diphosphate + H(+). The sequence is that of Phenylalanine--tRNA ligase alpha subunit from Bacillus mycoides (strain KBAB4) (Bacillus weihenstephanensis).